A 76-amino-acid polypeptide reads, in one-letter code: UPF0352 protein ECA2748 (76 aa).

Belongs to the UPF0352 family.

The sequence is that of UPF0352 protein ECA2748 from Pectobacterium atrosepticum (strain SCRI 1043 / ATCC BAA-672) (Erwinia carotovora subsp. atroseptica).